The following is a 317-amino-acid chain: Carbonic anhydrase 5B, mitochondrial (317 aa).

A mitochondrion-targeting transit peptide spans Met-1 to Ser-33. The region spanning Tyr-37–Phe-296 is the Alpha-carbonic anhydrase domain. Residues His-130, His-132, and His-155 each coordinate Zn(2+). A substrate-binding site is contributed by Thr-235–Thr-236.

It belongs to the alpha-carbonic anhydrase family. It depends on Zn(2+) as a cofactor. Expressed in the heart, liver, lung, kidney, testis, and skeletal muscle (at protein level).

The protein localises to the mitochondrion. The catalysed reaction is hydrogencarbonate + H(+) = CO2 + H2O. Mitochondrial carbonic anhydrase that catalyzes the reversible conversion of carbon dioxide to bicarbonate/HCO3. This chain is Carbonic anhydrase 5B, mitochondrial (Ca5b), found in Mus musculus (Mouse).